The primary structure comprises 307 residues: Aspartate carbamoyltransferase catalytic subunit (307 aa).

Residues Arg-55 and Thr-56 each contribute to the carbamoyl phosphate site. L-aspartate is bound at residue Lys-85. Arg-106, His-134, and Gln-137 together coordinate carbamoyl phosphate. Residues Arg-167 and Arg-228 each contribute to the L-aspartate site. Leu-266 and Pro-267 together coordinate carbamoyl phosphate.

It belongs to the aspartate/ornithine carbamoyltransferase superfamily. ATCase family. Heterododecamer (2C3:3R2) of six catalytic PyrB chains organized as two trimers (C3), and six regulatory PyrI chains organized as three dimers (R2).

The enzyme catalyses carbamoyl phosphate + L-aspartate = N-carbamoyl-L-aspartate + phosphate + H(+). The protein operates within pyrimidine metabolism; UMP biosynthesis via de novo pathway; (S)-dihydroorotate from bicarbonate: step 2/3. Functionally, catalyzes the condensation of carbamoyl phosphate and aspartate to form carbamoyl aspartate and inorganic phosphate, the committed step in the de novo pyrimidine nucleotide biosynthesis pathway. This is Aspartate carbamoyltransferase catalytic subunit from Tolumonas auensis (strain DSM 9187 / NBRC 110442 / TA 4).